Here is an 86-residue protein sequence, read N- to C-terminus: Small ribosomal subunit protein bS16 (86 aa).

This sequence belongs to the bacterial ribosomal protein bS16 family.

The chain is Small ribosomal subunit protein bS16 from Bordetella petrii (strain ATCC BAA-461 / DSM 12804 / CCUG 43448).